The chain runs to 782 residues: Endonuclease MutS2 (782 aa).

336–343 serves as a coordination point for ATP; the sequence is GPNTGGKT. The 76-residue stretch at 707 to 782 folds into the Smr domain; sequence LDLRGYRYED…GFGVTVATLK (76 aa).

The protein belongs to the DNA mismatch repair MutS family. MutS2 subfamily. In terms of assembly, homodimer. Binds to stalled ribosomes, contacting rRNA.

Functionally, endonuclease that is involved in the suppression of homologous recombination and thus may have a key role in the control of bacterial genetic diversity. In terms of biological role, acts as a ribosome collision sensor, splitting the ribosome into its 2 subunits. Detects stalled/collided 70S ribosomes which it binds and splits by an ATP-hydrolysis driven conformational change. Acts upstream of the ribosome quality control system (RQC), a ribosome-associated complex that mediates the extraction of incompletely synthesized nascent chains from stalled ribosomes and their subsequent degradation. Probably generates substrates for RQC. The chain is Endonuclease MutS2 from Staphylococcus aureus (strain MRSA252).